The primary structure comprises 316 residues: Small ribosomal subunit biogenesis GTPase RsgA (316 aa).

The 166-residue stretch at 83-248 (DQYKSKLFAA…LIDSPGFQEF (166 aa)) folds into the CP-type G domain. GTP contacts are provided by residues 131–134 (NKTD) and 185–193 (GQSGMGKST). Positions 272, 277, 279, and 285 each coordinate Zn(2+).

It belongs to the TRAFAC class YlqF/YawG GTPase family. RsgA subfamily. Monomer. Associates with 30S ribosomal subunit, binds 16S rRNA. Requires Zn(2+) as cofactor.

The protein resides in the cytoplasm. One of several proteins that assist in the late maturation steps of the functional core of the 30S ribosomal subunit. Helps release RbfA from mature subunits. May play a role in the assembly of ribosomal proteins into the subunit. Circularly permuted GTPase that catalyzes slow GTP hydrolysis, GTPase activity is stimulated by the 30S ribosomal subunit. The sequence is that of Small ribosomal subunit biogenesis GTPase RsgA from Paraburkholderia xenovorans (strain LB400).